We begin with the raw amino-acid sequence, 831 residues long: Replication restart protein PriA (831 aa).

Residues 304 to 471 (VLPLQGYHQV…HRHQNDPQRH (168 aa)) form the Helicase ATP-binding domain. An ATP-binding site is contributed by 317–324 (GVTGSGKT). Positions 413–416 (DEEH) match the DEAH box motif. C537, C540, C546, C549, C568, C571, C581, and C584 together coordinate Zn(2+). The Helicase C-terminal domain occupies 575–735 (EIQPKVCPEC…ELPQREMLNY (161 aa)).

The protein belongs to the helicase family. PriA subfamily. In terms of assembly, component of the replication restart primosome. Zn(2+) serves as cofactor.

It catalyses the reaction Couples ATP hydrolysis with the unwinding of duplex DNA by translocating in the 3'-5' direction.. It carries out the reaction ATP + H2O = ADP + phosphate + H(+). Functionally, initiates the restart of stalled replication forks, which reloads the replicative helicase on sites other than the origin of replication. Recognizes and binds to abandoned replication forks and remodels them to uncover a helicase loading site. Promotes assembly of the primosome at these replication forks. This is Replication restart protein PriA from Synechocystis sp. (strain ATCC 27184 / PCC 6803 / Kazusa).